The sequence spans 196 residues: Type-4 uracil-DNA glycosylase (196 aa).

Positions 13 and 16 each coordinate [4Fe-4S] cluster. Residues 40–42, Phe-54, and Asn-80 each bind uracil; that span reads GEA. 2 residues coordinate [4Fe-4S] cluster: Cys-84 and Cys-100. His-162 lines the uracil pocket.

This sequence belongs to the uracil-DNA glycosylase (UDG) superfamily. Type 4 (UDGa) family.

The catalysed reaction is Hydrolyzes single-stranded DNA or mismatched double-stranded DNA and polynucleotides, releasing free uracil.. In terms of biological role, removes uracil bases that are present in DNA as a result of either deamination of cytosine or misincorporation of dUMP instead of dTMP. Can remove uracil from double-stranded DNA containing either a U/G or U/A base pair as well as from single-stranded DNA. This chain is Type-4 uracil-DNA glycosylase, found in Pyrobaculum aerophilum (strain ATCC 51768 / DSM 7523 / JCM 9630 / CIP 104966 / NBRC 100827 / IM2).